The primary structure comprises 356 residues: Phosphate acyltransferase (356 aa).

It belongs to the PlsX family. In terms of assembly, homodimer. Probably interacts with PlsY.

The protein resides in the cytoplasm. The catalysed reaction is a fatty acyl-[ACP] + phosphate = an acyl phosphate + holo-[ACP]. It functions in the pathway lipid metabolism; phospholipid metabolism. Its function is as follows. Catalyzes the reversible formation of acyl-phosphate (acyl-PO(4)) from acyl-[acyl-carrier-protein] (acyl-ACP). This enzyme utilizes acyl-ACP as fatty acyl donor, but not acyl-CoA. This chain is Phosphate acyltransferase, found in Xanthobacter autotrophicus (strain ATCC BAA-1158 / Py2).